We begin with the raw amino-acid sequence, 331 residues long: MELLCPAGNLPALKAAIENGADAVYIGLKDDTNARHFAGLNFTEKKLQEAVSFVHQHRRKLHIAINTFAHPDGYARWQRAVDMAAQLGADALILADLAMLEYAAERYPHIERHVSVQASATNEEAINFYHRHFDVARVVLPRVLSIHQVKQLARVTPVPLEVFAFGSLCIMSEGRCYLSSYLTGESPNTIGACSPARFVRWQQTPQGLESRLNEVLIDRYQDGENAGYPTLCKGRYLVDGERYHALEEPTSLNTLELLPELMAANIASVKIEGRQRSPAYVSQVAKVWRQAIDRCKADPQNFVPQSAWMETLGSMSEGTQTTLGAYHRKWQ.

Residues C169, C176, C193, and C232 each contribute to the [4Fe-4S] cluster site.

It belongs to the peptidase U32 family. UbiU subfamily. As to quaternary structure, forms a heterodimer with UbiV. The cofactor is [4Fe-4S] cluster.

It functions in the pathway cofactor biosynthesis; ubiquinone biosynthesis. Required for O(2)-independent ubiquinone (coenzyme Q) biosynthesis. Together with UbiV, is essential for the C6-hydroxylation reaction in the oxygen-independent ubiquinone biosynthesis pathway. This Escherichia coli (strain K12) protein is Ubiquinone biosynthesis protein UbiU.